The primary structure comprises 421 residues: UDP-N-acetylglucosamine 1-carboxyvinyltransferase (421 aa).

Position 26–27 (26–27 (KN)) interacts with phosphoenolpyruvate. A UDP-N-acetyl-alpha-D-glucosamine-binding site is contributed by R96. Residue D120 is the Proton donor of the active site. 2 residues coordinate UDP-N-acetyl-alpha-D-glucosamine: D308 and V330.

The protein belongs to the EPSP synthase family. MurA subfamily.

The protein localises to the cytoplasm. The enzyme catalyses phosphoenolpyruvate + UDP-N-acetyl-alpha-D-glucosamine = UDP-N-acetyl-3-O-(1-carboxyvinyl)-alpha-D-glucosamine + phosphate. Its pathway is cell wall biogenesis; peptidoglycan biosynthesis. Functionally, cell wall formation. Adds enolpyruvyl to UDP-N-acetylglucosamine. This is UDP-N-acetylglucosamine 1-carboxyvinyltransferase from Corynebacterium efficiens (strain DSM 44549 / YS-314 / AJ 12310 / JCM 11189 / NBRC 100395).